The sequence spans 354 residues: Alkanal monooxygenase alpha chain (354 aa).

Belongs to the bacterial luciferase oxidoreductase family. Heterodimer of an alpha and a beta chain.

The catalysed reaction is a long-chain fatty aldehyde + FMNH2 + O2 = a long-chain fatty acid + hnu + FMN + H2O + 2 H(+). Its function is as follows. Light-emitting reaction in luminous bacteria. The polypeptide is Alkanal monooxygenase alpha chain (luxA) (Photobacterium leiognathi).